The primary structure comprises 576 residues: Arginine--tRNA ligase (576 aa).

Residues 121-131 carry the 'HIGH' region motif; sequence PNLAKEMHVGH.

It belongs to the class-I aminoacyl-tRNA synthetase family. In terms of assembly, monomer.

The protein resides in the cytoplasm. It catalyses the reaction tRNA(Arg) + L-arginine + ATP = L-arginyl-tRNA(Arg) + AMP + diphosphate. The protein is Arginine--tRNA ligase of Alteromonas mediterranea (strain DSM 17117 / CIP 110805 / LMG 28347 / Deep ecotype).